Reading from the N-terminus, the 88-residue chain is HssA/B-like protein 17 (88 aa).

It belongs to the hssA/B family.

This chain is HssA/B-like protein 17 (hssl17), found in Dictyostelium discoideum (Social amoeba).